Consider the following 182-residue polypeptide: Large ribosomal subunit protein uL10 (182 aa).

Belongs to the universal ribosomal protein uL10 family. Part of the ribosomal stalk of the 50S ribosomal subunit. The N-terminus interacts with L11 and the large rRNA to form the base of the stalk. The C-terminus forms an elongated spine to which L12 dimers bind in a sequential fashion forming a multimeric L10(L12)X complex.

In terms of biological role, forms part of the ribosomal stalk, playing a central role in the interaction of the ribosome with GTP-bound translation factors. The polypeptide is Large ribosomal subunit protein uL10 (Janthinobacterium sp. (strain Marseille) (Minibacterium massiliensis)).